The following is a 178-amino-acid chain: Matrix-remodeling-associated protein 7 (178 aa).

Residues 7-27 (LLAALPALVTALALLLAWLLL) traverse the membrane as a helical segment. Positions 33–121 (RVPAPESTAS…AFSFKYSPGQ (89 aa)) are disordered. Positions 48-65 (APAPPEPPESCAPEPAPE) are enriched in pro residues. Positions 76–85 (PEESEAEEPA) are enriched in acidic residues. Phosphoserine is present on residues Ser-79 and Ser-165.

It is found in the membrane. The sequence is that of Matrix-remodeling-associated protein 7 (Mxra7) from Mus musculus (Mouse).